The primary structure comprises 186 residues: UPF0398 protein LCA_0919 (186 aa).

It belongs to the UPF0398 family.

The chain is UPF0398 protein LCA_0919 from Latilactobacillus sakei subsp. sakei (strain 23K) (Lactobacillus sakei subsp. sakei).